The primary structure comprises 537 residues: ATP-dependent 6-phosphofructokinase 5, chloroplastic (537 aa).

Residues 1-52 constitute a chloroplast transit peptide; the sequence is MDALSQAISSGISVPYKNNSSSLVPSHGLTSLILRKSRSPVNPSSRSRVSVR. A disordered region spans residues 35-64; it reads RKSRSPVNPSSRSRVSVRASEIQHSKTSAS. A compositionally biased stretch (low complexity) spans 39–54; the sequence is SPVNPSSRSRVSVRAS. Serine 147 bears the Phosphoserine mark. Residues glycine 189, 253 to 254, and 278 to 281 each bind ATP; these read RG and GNGT. Asparagine 279 is a binding site for Mg(2+). Substrate is bound by residues 307 to 309, 352 to 354, glutamate 408, and 460 to 463; these read TID, MGR, and YMIR. The active-site Proton acceptor is the aspartate 309.

It belongs to the phosphofructokinase type A (PFKA) family. PPi-dependent PFK group II subfamily. Atypical ATP-dependent clade 'X' sub-subfamily. In terms of assembly, homotetramer. The cofactor is Mg(2+). In terms of tissue distribution, expressed in roots, leaves, stems and flowers.

It localises to the plastid. The protein resides in the chloroplast. The catalysed reaction is beta-D-fructose 6-phosphate + ATP = beta-D-fructose 1,6-bisphosphate + ADP + H(+). The protein operates within carbohydrate degradation; glycolysis; D-glyceraldehyde 3-phosphate and glycerone phosphate from D-glucose: step 3/4. Its activity is regulated as follows. Allosterically activated by AMP. Functionally, catalyzes the phosphorylation of D-fructose 6-phosphate to fructose 1,6-bisphosphate by ATP, the first committing step of glycolysis. In Arabidopsis thaliana (Mouse-ear cress), this protein is ATP-dependent 6-phosphofructokinase 5, chloroplastic.